Reading from the N-terminus, the 337-residue chain is MIQIIYVASPESQQIHVWKLDSIYGLLELIQVIYTHGQAQPMAVHPNKRFLYVGIRPNFGITTYRIDQIGLLADHGTIGIFSSPTHLISDKKGAFLYCTSYRNNTVSVIPISMSGMLLDSPIQIIEGLLGCHSANIDKFKKLLWVPCLKENAIRLFNINSFGMLTSYDPSIIKINVGSGPRHMIFCDFDCYAYVINELTSTVDVIKYNNFQKIPSIVQTVSIIPKNISINRCWAADIHITPNGRWLYCTDRSINIISCLEISKKTKKLKFVGYQLTEEQPRGFAIDYQGKFLVVAGQKSNCISLYKIDSDNGTLTMLSRYSSGKGPMWVSIITLNCK.

The protein belongs to the cycloisomerase 2 family.

It carries out the reaction 6-phospho-D-glucono-1,5-lactone + H2O = 6-phospho-D-gluconate + H(+). The protein operates within carbohydrate degradation; pentose phosphate pathway; D-ribulose 5-phosphate from D-glucose 6-phosphate (oxidative stage): step 2/3. Its function is as follows. Catalyzes the hydrolysis of 6-phosphogluconolactone to 6-phosphogluconate. The chain is 6-phosphogluconolactonase from Blochmanniella pennsylvanica (strain BPEN).